A 185-amino-acid chain; its full sequence is Dense granule protein 2 (185 aa).

The N-terminal stretch at 1 to 23 (MFAVKHCLLVVAVGALVNVSVRA) is a signal peptide. Asn18 is a glycosylation site (N-linked (GlcNAc...) asparagine). Disordered regions lie at residues 41-75 (GKPLDERAVGGKGEHTPPLPDERQQEPEEPVSQRA) and 142-185 (ANVE…DFSQ). The span at 43-66 (PLDERAVGGKGEHTPPLPDERQQE) shows a compositional bias: basic and acidic residues.

In terms of processing, may also be O-glycosylated. Post-translationally, the N-terminus is blocked.

It localises to the parasitophorous vacuole. Its function is as follows. Major granular component involved in excreted-secreted antigen (ESA) immunity. Possibly acts in conjunction with GRA1. This Toxoplasma gondii protein is Dense granule protein 2 (GRA2).